The primary structure comprises 152 residues: Transcriptional regulator MraZ (152 aa).

2 SpoVT-AbrB domains span residues 5–52 and 81–124; these read ATLV…PLPE and ASEC…DETT.

This sequence belongs to the MraZ family. Forms oligomers.

Its subcellular location is the cytoplasm. It is found in the nucleoid. Functionally, negatively regulates its own expression and that of the subsequent genes in the proximal part of the division and cell wall (dcw) gene cluster. Acts by binding directly to DNA. May also regulate the expression of genes outside the dcw cluster. In Shigella dysenteriae serotype 1 (strain Sd197), this protein is Transcriptional regulator MraZ.